The chain runs to 1763 residues: MSSRLRIPLWLLLPTTALVYFVTTVSTQITCRDCTNRGCFCVGEKGSMGIPGPQGPPGAQGIRGFPGPEGLPGPKGQKGSQGPPGPQGIKGDRGIIGVPGFPGNDGANGRPGEPGPPGAPGWDGCNGTDGAPGVPGLPGPPGMPGFPGPPGVPGMKGEPAIGYAGAPGEKGDAGMPGMPGLPGPPGRDGFPGEKGDRGDVGQAGPRGPPGEAGPPGNPGIGSIGPKGDPGEQGPRGPQGPPGPVPSTGAKGTIIGPEGAPGMKGEKGDPGEAGPRGFPGTPGVAGQPGLPGMKGEKGLSGPAGPRGKEGRPGLPGPPGFKGDRGLDGLPGVPGLPGQKGEAGFPGRDGAKGARGPPGPPGGGEFSDGPPGPPGLPGREGQPGPPGADGYPGPPGPQGPQGLPGGPGLPGLPGLEGLPGPKGEKGDSGIPGAPGVQGPPGLAGPPGAKGEPGPRGVDGQSIPGLPGKDGRPGLDGLPGRKGEMGLPGVRGPPGDSLNGLPGPPGPRGPQGPKGYDGRDGAPGLPGIPGPKGDRGGTCAFCAHGAKGEKGDAGYAGLPGPQGERGLPGIPGATGAPGDDGLPGAPGRPGPPGPPGQDGLPGLPGQKGEPTQLTLRPGPPGYPGQKGETGFPGPRGQEGLPGKPGIVGAPGLPGPPGPKGEPGLTGLPEKPGKDGIPGLPGLKGEPGYGQPGMPGLPGMKGDAGLPGLPGLPGAVGPMGPPVPESQLRPGPPGKDGLPGLPGPKGEAGFPGAPGLQGPAGLPGLPGMKGNPGLPGAPGLAGLPGIPGEKGIAGKPGLPGLTGAKGEAGYPGQPGLPGPKGEPGPSTTGPPGPPGFPGLKGKDGIPGAPGLPGLEGQRGLPGVPGQKGEIGLPGLAGAPGFPGAKGEPGLPGLPGKEGPQGPPGQPGAPGFPGQKGDEGLPGLPGVSGMKGDTGLPGVPGLAGPPGQPGFPGQKGQPGFPGVAGAKGEAGLPGLPGAPGQKGEQGLAGLPGIPGMKGAPGIPGAPGQDGLPGLPGVKGDRGFNGLPGEKGEPGPAARDGEKGEPGLPGQPGLRGPQGPPGLPGLPGLKGDEGQPGYGAPGLMGEKGLPGLPGKPGRPGAPGPKGLDGAPGFPGLKGEAGLPGAPGLPGQDGLPGLPGQKGESGFPGQPGLVGPPGLPGKMGAPGIRGEKGDAGLPGLPGERGLDGLPGQKGEAGFPGAPGLPGPVGPKGSAGAPGFPGLKGEPGLPGLEGQPGPRGMKGEAGLPGAPGRDGLPGLPGMKGEAGLPGLPGQPGKSITGPKGNAGLPGLPGKDGLPGLPGLKGEPGKPGYAGAAGIKGEPGLPGIPGAKGEPGLSGIPGKRGNDGIPGKPGPAGLPGLPGMKGESGLPGPQGPAGLPGLPGLKGEPGLPGFPGQKGETGFPGQPGIPGLPGMKGDSGYPGAPGRDGAPGKQGEPGPMGPPGAQPIVQRGEKGEMGPMGAPGIRGEKGLPGLDGLPGPSGPPGFAGAKGRDGFPGQPGMPGEKGAPGLPGFPGIEGIPGPPGLPGPSGPPGPPGPSYKDGFLLVKHSQTSEVPQCPPGMVKLWDGYSLLYIEGNEKSHNQDLGHAGSCLSRFSTMPFLFCDVNNVCNYASRNDKSYWLSTTAPIPMMPVSEGGIEPYISRCAVCEAPANVIAVHSQTIQIPNCPNGWNSLWIGYSFAMHTGAGAEGGGQSLSSPGSCLEDFRATPFIECNGARGTCHYFANKFSFWLTTIEDDQQFRIPESETLKAGSLRTRVSRCQVCIRSPDVQPYRG.

The signal sequence occupies residues 1–26 (MSSRLRIPLWLLLPTTALVYFVTTVS). The 7S domain stretch occupies residues 27–42 (TQITCRDCTNRGCFCV). The interval 43–1529 (GEKGSMGIPG…SGPPGPPGPS (1487 aa)) is triple-helical region. Disordered stretches follow at residues 51–529 (PGPQ…PGPK) and 550–1529 (AGYA…PGPS). A compositionally biased stretch (low complexity) spans 72–81 (PGPKGQKGSQ). Asn-126 carries N-linked (GlcNAc...) asparagine glycosylation. The segment covering 135–152 (PGLPGPPGMPGFPGPPGV) has biased composition (pro residues). Basic and acidic residues predominate over residues 190 to 199 (FPGEKGDRGD). Residues 206-217 (RGPPGEAGPPGN) are compositionally biased toward pro residues. A compositionally biased stretch (low complexity) spans 225 to 235 (PKGDPGEQGPR). An O-linked (Xyl...) (glycosaminoglycan) serine glycan is attached at Ala-249. Over residues 326 to 335 (DGLPGVPGLP) the composition is skewed to low complexity. Positions 400–409 (GLPGGPGLPG) are enriched in gly residues. 2 stretches are compositionally biased toward low complexity: residues 410 to 419 (LPGLEGLPGP) and 428 to 453 (IPGA…PGPR). Over residues 466 to 481 (KDGRPGLDGLPGRKGE) the composition is skewed to basic and acidic residues. Low complexity predominate over residues 564-582 (LPGIPGATGAPGDDGLPGA). Residues 583–592 (PGRPGPPGPP) are compositionally biased toward pro residues. Composition is skewed to low complexity over residues 699–714 (DAGL…AVGP) and 731–783 (KDGL…PGIP). Over residues 810–832 (PGLPGPKGEPGPSTTGPPGPPGF) the composition is skewed to pro residues. 10 stretches are compositionally biased toward low complexity: residues 865–895 (EIGL…KEGP), 946–977 (FPGQ…PGQK), 1040–1051 (PGLPGQPGLRGP), 1077–1086 (LMGEKGLPGL), 1108–1146 (PGLK…QPGL), 1210–1231 (PGFP…PGPR), 1280–1296 (LPGL…PGLK), 1367–1386 (PAGL…PGFP), 1462–1480 (LPGL…FAGA), and 1499–1510 (PGLPGFPGIEGI). Positions 1511–1528 (PGPPGLPGPSGPPGPPGP) are enriched in pro residues. The region spanning 1533–1756 (GFLLVKHSQT…SRCQVCIRSP (224 aa)) is the Collagen IV NC1 domain. Cystine bridges form between Cys-1548–Cys-1637, Cys-1581–Cys-1634, Cys-1593–Cys-1599, Cys-1656–Cys-1752, Cys-1690–Cys-1749, and Cys-1702–Cys-1709.

The protein belongs to the type IV collagen family. As to quaternary structure, trimers of two alpha 1(IV) and one alpha 2(IV) chain. Type IV collagen forms a mesh-like network linked through intermolecular interactions between 7S domains and between NC1 domains. Post-translationally, prolines at the third position of the tripeptide repeating unit (G-X-Y) are hydroxylated in some or all of the chains. Type IV collagens contain numerous cysteine residues which are involved in inter- and intramolecular disulfide bonding. 12 of these, located in the NC1 domain, are conserved in all known type IV collagens. In terms of processing, the trimeric structure of the NC1 domains is stabilized by covalent bonds between Lys and Met residues.

It localises to the secreted. The protein resides in the extracellular space. The protein localises to the extracellular matrix. Its subcellular location is the basement membrane. Its function is as follows. Collagen type IV is specific for basement membranes. This is Collagen alpha-2(IV) chain from Ascaris suum (Pig roundworm).